Here is a 229-residue protein sequence, read N- to C-terminus: Ribonuclease 3 (229 aa).

Residues 7-132 (ISAFCDRIGH…VIAAVYRDAG (126 aa)) form the RNase III domain. Position 45 (Glu-45) interacts with Mg(2+). Residue Asp-49 is part of the active site. Mg(2+) contacts are provided by Asp-118 and Glu-121. Residue Glu-121 is part of the active site. One can recognise a DRBM domain in the interval 157–226 (DPKTALQEWA…AKALLAQVES (70 aa)).

The protein belongs to the ribonuclease III family. Homodimer. Requires Mg(2+) as cofactor.

The protein localises to the cytoplasm. The catalysed reaction is Endonucleolytic cleavage to 5'-phosphomonoester.. Digests double-stranded RNA. Involved in the processing of primary rRNA transcript to yield the immediate precursors to the large and small rRNAs (23S and 16S). Processes some mRNAs, and tRNAs when they are encoded in the rRNA operon. Processes pre-crRNA and tracrRNA of type II CRISPR loci if present in the organism. The sequence is that of Ribonuclease 3 from Dinoroseobacter shibae (strain DSM 16493 / NCIMB 14021 / DFL 12).